We begin with the raw amino-acid sequence, 531 residues long: MGLHVTLQGLAGLLLLLYALPWAEGGKVLVFPMEGSHWLSMRDVVRELHARGHQAVVLAPEVTVHIKEEDFFTLQTYPVPYTRQGFRQQMMRNIKVVFETGNYVKTFLETSEILKNISTVLLRSCMNLLHNGSLLQHLNSSSFDMVLTDPVIPCGQVLAKYLGIPTVFFLRYIPCGIDSEATQCPKPSSYIPNLLTMLSDHMTFLQRVKNMLYPLALKYICHFSFTRYESLASELLQREVSLVEVLSHASVWLFRGDFVFDYPRPVMPNMVFIGGINCVIKKPLSQEFEAYVNASGEHGIVVFSLGSMVSEIPEKKAMEIAEALGRIPQTLLWRYTGTRPSNLAKNTILVKWLPQNDLLGHPKARAFITHSGSHGIYEGICNGVPMVMMPLFGDQMDNAKRMETRGAGVTLNVLEMTADDLENALKTVINNKSYKENIMRLSSLHKDRPIEPLDLAVFWVEYVMRHKGAPHLRPAAHDLTWYQYHSLDVIGFLLAIVLTVVFIVYKSCAYGCRKCFGGKGRVKKSHKSKTH.

Positions 1 to 25 (MGLHVTLQGLAGLLLLLYALPWAEG) are cleaved as a signal peptide. Residues Asn-116, Asn-131, Asn-139, Asn-293, and Asn-431 are each glycosylated (N-linked (GlcNAc...) asparagine). The helical transmembrane segment at 489–505 (VIGFLLAIVLTVVFIVY) threads the bilayer.

It belongs to the UDP-glycosyltransferase family. In terms of assembly, homodimer. Homooligomer. Interacts with UGT1A1, UGT1A3, UGT1A4, UGT1A6, UGT1A7, UGT1A8, UGT1A9 and UGT1A10 to form heterodimers.

The protein resides in the endoplasmic reticulum membrane. It carries out the reaction glucuronate acceptor + UDP-alpha-D-glucuronate = acceptor beta-D-glucuronoside + UDP + H(+). It catalyses the reaction zolasartan + UDP-alpha-D-glucuronate = zolarsartan-1-N-beta-D-glucuronide + UDP. In terms of biological role, UDP-glucuronosyltransferase (UGT) that catalyzes phase II biotransformation reactions in which lipophilic substrates are conjugated with glucuronic acid to increase the metabolite's water solubility, thereby facilitating excretion into either the urine or bile. Essential for the elimination and detoxification of drugs, xenobiotics and endogenous compounds. Involved in the glucuronidation of the AGTR1 angiotensin receptor antagonist zolarsatan, a drug which can inhibit the effect of angiotensin II. The sequence is that of UDP-glucuronosyltransferase 1A5 from Rattus norvegicus (Rat).